The chain runs to 151 residues: UPF0336 protein Franean1_6066 (151 aa).

One can recognise a MaoC-like domain in the interval 8 to 127 (VGRSYTSDVP…NEVLVTSYEF (120 aa)).

The protein belongs to the UPF0336 family.

The sequence is that of UPF0336 protein Franean1_6066 from Parafrankia sp. (strain EAN1pec).